The primary structure comprises 836 residues: DNA gyrase subunit A (836 aa).

The Topo IIA-type catalytic domain maps to 34 to 500; sequence LPDARDGLKP…AGDVRDIEDI (467 aa). Tyrosine 122 functions as the O-(5'-phospho-DNA)-tyrosine intermediate in the catalytic mechanism. The GyrA-box motif lies at 527-533; it reads QKRGGQG.

It belongs to the type II topoisomerase GyrA/ParC subunit family. Heterotetramer, composed of two GyrA and two GyrB chains. In the heterotetramer, GyrA contains the active site tyrosine that forms a transient covalent intermediate with DNA, while GyrB binds cofactors and catalyzes ATP hydrolysis.

It is found in the cytoplasm. It carries out the reaction ATP-dependent breakage, passage and rejoining of double-stranded DNA.. In terms of biological role, a type II topoisomerase that negatively supercoils closed circular double-stranded (ds) DNA in an ATP-dependent manner to modulate DNA topology and maintain chromosomes in an underwound state. Negative supercoiling favors strand separation, and DNA replication, transcription, recombination and repair, all of which involve strand separation. Also able to catalyze the interconversion of other topological isomers of dsDNA rings, including catenanes and knotted rings. Type II topoisomerases break and join 2 DNA strands simultaneously in an ATP-dependent manner. The protein is DNA gyrase subunit A of Chlamydia trachomatis serovar D (strain ATCC VR-885 / DSM 19411 / UW-3/Cx).